The following is a 346-amino-acid chain: Dihydroorotase (346 aa).

Positions 14 and 16 each coordinate Zn(2+). Residues 16–18 (HLR) and N42 contribute to the substrate site. The Zn(2+) site is built by K100, H137, and H175. At K100 the chain carries N6-carboxylysine. H137 provides a ligand contact to substrate. Residue L220 coordinates substrate. D248 serves as a coordination point for Zn(2+). D248 is an active-site residue. Positions 252 and 264 each coordinate substrate.

The protein belongs to the metallo-dependent hydrolases superfamily. DHOase family. Class II DHOase subfamily. In terms of assembly, homodimer. Zn(2+) serves as cofactor.

It carries out the reaction (S)-dihydroorotate + H2O = N-carbamoyl-L-aspartate + H(+). It participates in pyrimidine metabolism; UMP biosynthesis via de novo pathway; (S)-dihydroorotate from bicarbonate: step 3/3. Functionally, catalyzes the reversible cyclization of carbamoyl aspartate to dihydroorotate. The polypeptide is Dihydroorotase (Cereibacter sphaeroides (strain ATCC 17025 / ATH 2.4.3) (Rhodobacter sphaeroides)).